Here is a 494-residue protein sequence, read N- to C-terminus: UPF0371 protein SPJ_0333 (494 aa).

Belongs to the UPF0371 family.

The sequence is that of UPF0371 protein SPJ_0333 from Streptococcus pneumoniae (strain JJA).